Here is a 103-residue protein sequence, read N- to C-terminus: Large ribosomal subunit protein bL21 (103 aa).

This sequence belongs to the bacterial ribosomal protein bL21 family. In terms of assembly, part of the 50S ribosomal subunit. Contacts protein L20.

This protein binds to 23S rRNA in the presence of protein L20. The sequence is that of Large ribosomal subunit protein bL21 from Clostridium acetobutylicum (strain ATCC 824 / DSM 792 / JCM 1419 / IAM 19013 / LMG 5710 / NBRC 13948 / NRRL B-527 / VKM B-1787 / 2291 / W).